A 94-amino-acid chain; its full sequence is Cell division topological specificity factor (94 aa).

This sequence belongs to the MinE family.

Functionally, prevents the cell division inhibition by proteins MinC and MinD at internal division sites while permitting inhibition at polar sites. This ensures cell division at the proper site by restricting the formation of a division septum at the midpoint of the long axis of the cell. In Alkaliphilus metalliredigens (strain QYMF), this protein is Cell division topological specificity factor.